A 469-amino-acid polypeptide reads, in one-letter code: L-seryl-tRNA(Sec) selenium transferase (469 aa).

Lys-295 is subject to N6-(pyridoxal phosphate)lysine.

The protein belongs to the SelA family. Requires pyridoxal 5'-phosphate as cofactor.

It localises to the cytoplasm. The enzyme catalyses L-seryl-tRNA(Sec) + selenophosphate + H(+) = L-selenocysteinyl-tRNA(Sec) + phosphate. Its pathway is aminoacyl-tRNA biosynthesis; selenocysteinyl-tRNA(Sec) biosynthesis; selenocysteinyl-tRNA(Sec) from L-seryl-tRNA(Sec) (bacterial route): step 1/1. Functionally, converts seryl-tRNA(Sec) to selenocysteinyl-tRNA(Sec) required for selenoprotein biosynthesis. In Methylocella silvestris (strain DSM 15510 / CIP 108128 / LMG 27833 / NCIMB 13906 / BL2), this protein is L-seryl-tRNA(Sec) selenium transferase.